The sequence spans 805 residues: Polyribonucleotide nucleotidyltransferase (805 aa).

The Mg(2+) site is built by Asp-491 and Asp-497. The 60-residue stretch at 558–617 folds into the KH domain; that stretch reads PRMESMIIDKNKIKNVIGTGGKNVREICEKTGVKIEISQDGTVMIYAVSRDAVEEAKNMI. Residues 627–694 enclose the S1 motif domain; sequence GKVFSGVISE…DKDHVQLSMR (68 aa). A disordered region spans residues 702 to 805; that stretch reads DLLEHESYSS…GGGNKKPRFF (104 aa).

The protein belongs to the polyribonucleotide nucleotidyltransferase family. The cofactor is Mg(2+).

The protein localises to the cytoplasm. The catalysed reaction is RNA(n+1) + phosphate = RNA(n) + a ribonucleoside 5'-diphosphate. Involved in mRNA degradation. Catalyzes the phosphorolysis of single-stranded polyribonucleotides processively in the 3'- to 5'-direction. The polypeptide is Polyribonucleotide nucleotidyltransferase (Anaplasma marginale (strain Florida)).